The chain runs to 95 residues: uncharacterized protein (95 aa).

The chain crosses the membrane as a helical span at residues 3 to 23 (FVIIIAILLLGISLILAFTVL).

It is found in the membrane. This is an uncharacterized protein from Methanocaldococcus jannaschii (strain ATCC 43067 / DSM 2661 / JAL-1 / JCM 10045 / NBRC 100440) (Methanococcus jannaschii).